We begin with the raw amino-acid sequence, 583 residues long: Immunity-related GTPase family Q protein (583 aa).

A disulfide bond links cysteine 152 and cysteine 158. Positions 155-179 (SDRCEELERLQVVLRTQAEALQRLL) form a coiled coil. Positions 186–189 (FEVL) match the LIR 1 motif. Threonine 203 bears the Phosphothreonine mark. One can recognise an IRG-type G domain in the interval 223–409 (ARLDLAVAGT…PGLGTWLQHA (187 aa)). The disordered stretch occupies residues 322–373 (APLVGVRTDGQGEDPPEVLEEEKAQNASDGNSGDARSEGKKAGIGDSGCTAA). A compositionally biased stretch (acidic residues) spans 332–341 (QGEDPPEVLE). The short motif at 381–384 (WEVL) is the LIR 2 element.

The protein belongs to the TRAFAC class dynamin-like GTPase superfamily. IRG family. In terms of assembly, interacts (via LIR motif 1) with GABARAPL2. Interacts (via LIR motif 2) with MAP1LC3B/LC3B.

The protein resides in the lysosome. Its subcellular location is the cytoplasmic vesicle. It localises to the autophagosome. Functionally, autophagy receptor that specifically promotes clearance of misfolded MHC class I molecules by targeting them to the lysosome for degradation. Acts as a molecular adapter that specifically recognizes and binds (1) misfolded MHC class I molecules following their ubiquitination, as well as (2) autophagy-related proteins, promoting the recruitment of misfolded MHC class I molecules to autophagy machinery for degradation. Degradation of misfolded MHC class I molecules is essential to prevent accumulation of defective MHC class I complexes at the surface of CD8(+) T-cells and prevent a stronger T-cell-mediated response. In contrast to other members of the family, does not show GTPase activity. The chain is Immunity-related GTPase family Q protein (Irgq) from Mus musculus (Mouse).